Here is a 346-residue protein sequence, read N- to C-terminus: dTDP-glucose 4,6-dehydratase (346 aa).

Residues 17 to 18 (FI), 38 to 41 (DKLT), 64 to 65 (DI), 86 to 90 (LAAES), and Thr-105 contribute to the NAD(+) site. Ser-90 provides a ligand contact to substrate. Thr-139 contacts substrate. The active-site Proton donor is the Asp-140. Catalysis depends on proton acceptor residues Glu-141 and Tyr-165. 165-169 (YSASK) lines the NAD(+) pocket. Asn-194 contributes to the substrate binding site. Asn-195 serves as a coordination point for NAD(+). Substrate-binding positions include 204–205 (KL), 220–222 (PVY), Arg-229, Asn-264, and 298–302 (DRPGH).

Belongs to the NAD(P)-dependent epimerase/dehydratase family. dTDP-glucose dehydratase subfamily. As to quaternary structure, homodimer. The cofactor is NAD(+).

The enzyme catalyses dTDP-alpha-D-glucose = dTDP-4-dehydro-6-deoxy-alpha-D-glucose + H2O. Its pathway is carbohydrate biosynthesis; dTDP-L-rhamnose biosynthesis. It participates in bacterial outer membrane biogenesis; LPS O-antigen biosynthesis. In terms of biological role, catalyzes the dehydration of dTDP-D-glucose to form dTDP-6-deoxy-D-xylo-4-hexulose via a three-step process involving oxidation, dehydration and reduction. This Neisseria gonorrhoeae protein is dTDP-glucose 4,6-dehydratase.